A 61-amino-acid chain; its full sequence is Metallothionein-1C (61 aa).

The segment at 1–29 (MDPNCSCSTGGSCSCAGSCTCKACRCTSC) is beta. 20 residues coordinate a divalent metal cation: C5, C7, C13, C15, C19, C21, C24, C26, C29, C33, C34, C36, C37, C41, C44, C48, C50, C57, C59, and C60. Positions 30 to 61 (KKSCCSCCPAGCARCAQGCICKGASDKCSCCA) are alpha.

Belongs to the metallothionein superfamily. Type 1 family. In terms of assembly, monomer.

Its function is as follows. Metallothioneins have a high content of cysteine residues that bind various heavy metals; these proteins are transcriptionally regulated by both heavy metals and glucocorticoids. In Sus scrofa (Pig), this protein is Metallothionein-1C (MT1C).